We begin with the raw amino-acid sequence, 231 residues long: MKKTLLASSLAVGLGIVAGNAGHEAHASEADLNKASLAQMAQSNDQTLNQKPIEAGAYNYTFDYEGFTYHFESDGTHFAWNYHATGTNGADMSAQAPTTNNVAPSAVQANQVQSQEVEAPQNAQTQQPQASTSNNSQVTATPTESKSSEGSSVNVNAHLKQIAQRESGGNIHAVNPTSGAAGKYQFLQSTWDSVAPAKYKGVSPANAPESVQDAAAVKLYNTGGAGHWVTA.

A signal peptide spans 1–27 (MKKTLLASSLAVGLGIVAGNAGHEAHA). Polar residues predominate over residues 103-116 (APSAVQANQVQSQE). The disordered stretch occupies residues 103–153 (APSAVQANQVQSQEVEAPQNAQTQQPQASTSNNSQVTATPTESKSSEGSSV). Residues 119–137 (APQNAQTQQPQASTSNNSQ) show a composition bias toward low complexity. The span at 138–153 (VTATPTESKSSEGSSV) shows a compositional bias: polar residues.

This sequence belongs to the transglycosylase family. SceD subfamily.

It is found in the secreted. Its function is as follows. Is able to cleave peptidoglycan and affects clumping and separation of bacterial cells. The sequence is that of Probable transglycosylase SceD (sceD) from Staphylococcus aureus (strain COL).